The chain runs to 176 residues: Prepronociceptin (176 aa).

Residues 1-19 (MKILFCDLLLLSLFSSVSS) form the signal peptide. Propeptides lie at residues 20–95 (SCQK…MQHL) and 169–176 (TLHQNGNA).

The protein belongs to the opioid neuropeptide precursor family. Specific enzymatic cleavages at paired basic residues probably yield other active peptides besides nociceptin. Post-translationally, the N-terminal domain contains 6 conserved cysteines thought to be involved in disulfide bonding and/or processing.

It is found in the secreted. Ligand of the opioid receptor-like receptor OPRL1. It may act as a transmitter in the brain by modulating nociceptive and locomotor behavior. May be involved in neuronal differentiation and development. Functionally, blocks nociceptin action in pain transmission by inhibiting nociceptin-induced hyperalgesia and allodynia. Its function is as follows. Has potent analgesic activity. The chain is Prepronociceptin (PNOC) from Bos taurus (Bovine).